The following is a 173-amino-acid chain: Acetyl-CoA decarbonylase/synthase complex subunit epsilon (173 aa).

It belongs to the CdhB family. Heterotetramer of two alpha and two epsilon subunits. The ACDS complex is made up of alpha, epsilon, beta, gamma and delta subunits with a probable stoichiometry of (alpha(2)epsilon(2))(4)-beta(8)-(gamma(1)delta(1))(8).

It functions in the pathway one-carbon metabolism; methanogenesis from acetate. In terms of biological role, part of a complex that catalyzes the reversible cleavage of acetyl-CoA, allowing growth on acetate as sole source of carbon and energy. The alpha-epsilon subcomponent functions as a carbon monoxide dehydrogenase. The precise role of the epsilon subunit is unclear; it may have a stabilizing role within the alpha(2)epsilon(2) component and/or be involved in electron transfer to FAD during a potential FAD-mediated CO oxidation. The chain is Acetyl-CoA decarbonylase/synthase complex subunit epsilon from Methanothermobacter thermautotrophicus (strain ATCC 29096 / DSM 1053 / JCM 10044 / NBRC 100330 / Delta H) (Methanobacterium thermoautotrophicum).